The following is a 195-amino-acid chain: uncharacterized protein (195 aa).

Positions 143-195 (NKLIETINTNRTNNTDNKSTKSKKQTETKKSLRTNKIVKQPINKSKKNIREEY) are disordered. A compositionally biased stretch (low complexity) spans 148–159 (TINTNRTNNTDN).

This is an uncharacterized protein from Acanthamoeba polyphaga (Amoeba).